A 364-amino-acid chain; its full sequence is Serpentine receptor class epsilon-27 (364 aa).

7 helical membrane passes run 31 to 51 (VIAS…VVSL), 64 to 84 (FIIL…GKLI), 125 to 145 (LLII…FGAV), 167 to 187 (IFIP…CSCL), 195 to 215 (IITI…VFFL), 257 to 277 (LIFS…TLLL), and 290 to 310 (NALF…IPAW).

It belongs to the nematode receptor-like protein sre family.

It is found in the membrane. The polypeptide is Serpentine receptor class epsilon-27 (sre-27) (Caenorhabditis elegans).